The primary structure comprises 454 residues: 3-phosphoshikimate 1-carboxyvinyltransferase (454 aa).

Residues 1-31 form a disordered region; the sequence is MSENHSEGASRPVISRRPAAGLRADHPVHVP. Residues Lys34, Ser35, and Arg39 each coordinate 3-phosphoshikimate. Lys34 serves as a coordination point for phosphoenolpyruvate. Phosphoenolpyruvate contacts are provided by Gly107 and Arg135. Residues Ser180, Gln182, Asp334, and Lys361 each contribute to the 3-phosphoshikimate site. A phosphoenolpyruvate-binding site is contributed by Gln182. Asp334 serves as the catalytic Proton acceptor. Residues Arg365 and Arg409 each contribute to the phosphoenolpyruvate site.

This sequence belongs to the EPSP synthase family. As to quaternary structure, monomer.

The protein localises to the cytoplasm. The catalysed reaction is 3-phosphoshikimate + phosphoenolpyruvate = 5-O-(1-carboxyvinyl)-3-phosphoshikimate + phosphate. The protein operates within metabolic intermediate biosynthesis; chorismate biosynthesis; chorismate from D-erythrose 4-phosphate and phosphoenolpyruvate: step 6/7. In terms of biological role, catalyzes the transfer of the enolpyruvyl moiety of phosphoenolpyruvate (PEP) to the 5-hydroxyl of shikimate-3-phosphate (S3P) to produce enolpyruvyl shikimate-3-phosphate and inorganic phosphate. In Granulibacter bethesdensis (strain ATCC BAA-1260 / CGDNIH1), this protein is 3-phosphoshikimate 1-carboxyvinyltransferase.